Consider the following 250-residue polypeptide: DNA repair protein RecO (250 aa).

Belongs to the RecO family.

Functionally, involved in DNA repair and RecF pathway recombination. The sequence is that of DNA repair protein RecO from Lactobacillus helveticus (strain DPC 4571).